The following is a 138-amino-acid chain: ATP synthase epsilon chain (138 aa).

Belongs to the ATPase epsilon chain family. In terms of assembly, F-type ATPases have 2 components, CF(1) - the catalytic core - and CF(0) - the membrane proton channel. CF(1) has five subunits: alpha(3), beta(3), gamma(1), delta(1), epsilon(1). CF(0) has three main subunits: a, b and c.

It is found in the cell inner membrane. In terms of biological role, produces ATP from ADP in the presence of a proton gradient across the membrane. The chain is ATP synthase epsilon chain from Psychrobacter arcticus (strain DSM 17307 / VKM B-2377 / 273-4).